The following is a 418-amino-acid chain: Putative methylthiotransferase HP_0285 (418 aa).

In terms of domain architecture, MTTase N-terminal spans 2-110 (KKVYFKTFGC…INALLQEKKR (109 aa)). 6 residues coordinate [4Fe-4S] cluster: Cys-11, Cys-45, Cys-74, Cys-144, Cys-148, and Cys-151. One can recognise a Radical SAM core domain in the interval 130–355 (FVGKTRAFIK…KDLIFHKNKA (226 aa)).

Belongs to the methylthiotransferase family. It depends on [4Fe-4S] cluster as a cofactor.

This Helicobacter pylori (strain ATCC 700392 / 26695) (Campylobacter pylori) protein is Putative methylthiotransferase HP_0285.